We begin with the raw amino-acid sequence, 611 residues long: MRGRSEGGKKKPVIVLLCVASVVLVFVYLFFGSSNHKAIEYGRKLGLGGDDDDSTKKDDTSSSFYVEDVVGNGFTPRSFPVCDDRHSELIPCLDRNLIYQMRLKLDLSLMEHYERHCPPPERRFNCLIPPPPGYKIPIKWPKSRDEVWKVNIPHTHLAHEKSDQNWMVVKGEKINFPGGGTHFHYGADKYIASMANMLNFPNNVLNNGGRLRTFLDVGCGVASFGGYLLASEIMTMSLAPNDVHQNQIQFALERGIPAYLGVLGTKRLPYPSRSFELAHCSRCRIDWLQRDGILLLELDRVLRPGGYFAYSSPEAYAQDEEDLRIWREMSALVGRMCWTIAAKRNQTVIWQKPLTNDCYLGREPGTQPPLCNSDSDPDAVYGVNMEACITQYSDHDHKTKGSGLAPWPARLTSPPPRLADFGYSTDIFEKDTETWRQRVDTYWDLLSPKIQSDTVRNIMDMKASMGSFAAALKEKDVWVMNVVPEDGPNTLKLIYDRGLMGAVHSWCEAFSTYPRTYDLLHAWDIISDIKKRGCSAEDLLLEMDRILRPSGFILIRDKQSVVDLVKKYLKALHWEAVETKTASESDQDSDNVILIVQKKLWLTSESLRDLE.

Residues 1-11 (MRGRSEGGKKK) lie on the Cytoplasmic side of the membrane. Residues 12–32 (PVIVLLCVASVVLVFVYLFFG) form a helical; Signal-anchor for type II membrane protein membrane-spanning segment. Topologically, residues 33-611 (SSNHKAIEYG…LTSESLRDLE (579 aa)) are lumenal. N345 carries N-linked (GlcNAc...) asparagine glycosylation.

Belongs to the methyltransferase superfamily.

It localises to the golgi apparatus membrane. In Arabidopsis thaliana (Mouse-ear cress), this protein is Probable methyltransferase PMT1.